Reading from the N-terminus, the 180-residue chain is uncharacterized protein (180 aa).

The next 2 helical transmembrane spans lie at 37-59 and 128-147; these read VLHA…FPSF and AGSA…VLFV.

It localises to the cell membrane. This is an uncharacterized protein from Treponema pallidum (strain Nichols).